A 99-amino-acid polypeptide reads, in one-letter code: Large ribosomal subunit protein uL23 (99 aa).

Belongs to the universal ribosomal protein uL23 family. In terms of assembly, part of the 50S ribosomal subunit. Contacts protein L29, and trigger factor when it is bound to the ribosome.

One of the early assembly proteins it binds 23S rRNA. One of the proteins that surrounds the polypeptide exit tunnel on the outside of the ribosome. Forms the main docking site for trigger factor binding to the ribosome. In Pseudomonas entomophila (strain L48), this protein is Large ribosomal subunit protein uL23.